Consider the following 320-residue polypeptide: Glycerol-3-phosphate dehydrogenase [NAD(P)+] (320 aa).

Phenylalanine 11, arginine 30, and lysine 102 together coordinate NADPH. Sn-glycerol 3-phosphate contacts are provided by lysine 102, glycine 130, and serine 132. Alanine 134 provides a ligand contact to NADPH. Lysine 185, aspartate 238, serine 248, arginine 249, and asparagine 250 together coordinate sn-glycerol 3-phosphate. Lysine 185 functions as the Proton acceptor in the catalytic mechanism. An NADPH-binding site is contributed by arginine 249. An NADPH-binding site is contributed by glutamate 270.

The protein belongs to the NAD-dependent glycerol-3-phosphate dehydrogenase family.

It localises to the cytoplasm. It carries out the reaction sn-glycerol 3-phosphate + NAD(+) = dihydroxyacetone phosphate + NADH + H(+). The catalysed reaction is sn-glycerol 3-phosphate + NADP(+) = dihydroxyacetone phosphate + NADPH + H(+). The protein operates within membrane lipid metabolism; glycerophospholipid metabolism. In terms of biological role, catalyzes the reduction of the glycolytic intermediate dihydroxyacetone phosphate (DHAP) to sn-glycerol 3-phosphate (G3P), the key precursor for phospholipid synthesis. This chain is Glycerol-3-phosphate dehydrogenase [NAD(P)+], found in Roseobacter denitrificans (strain ATCC 33942 / OCh 114) (Erythrobacter sp. (strain OCh 114)).